The sequence spans 558 residues: Urocanate hydratase (558 aa).

Residues 54-55, Q132, 178-180, E198, 244-245, 265-269, 275-276, and Y324 each bind NAD(+); these read GG, GMG, NA, QTSAH, and YL. The active site involves C412. G494 contributes to the NAD(+) binding site.

Belongs to the urocanase family. NAD(+) serves as cofactor.

It is found in the cytoplasm. It catalyses the reaction 4-imidazolone-5-propanoate = trans-urocanate + H2O. It functions in the pathway amino-acid degradation; L-histidine degradation into L-glutamate; N-formimidoyl-L-glutamate from L-histidine: step 2/3. Catalyzes the conversion of urocanate to 4-imidazolone-5-propionate. In Acinetobacter baumannii (strain ACICU), this protein is Urocanate hydratase.